The chain runs to 39 residues: MTTDRTYPIFTVRWLAVHGLAVPTVFFLGSISAMQFIQR.

A helical transmembrane segment spans residues 14–30 (WLAVHGLAVPTVFFLGS). His18 lines the heme pocket.

It belongs to the PsbE/PsbF family. As to quaternary structure, heterodimer of an alpha subunit and a beta subunit. PSII is composed of 1 copy each of membrane proteins PsbA, PsbB, PsbC, PsbD, PsbE, PsbF, PsbH, PsbI, PsbJ, PsbK, PsbL, PsbM, PsbT, PsbX, PsbY, PsbZ, Psb30/Ycf12, at least 3 peripheral proteins of the oxygen-evolving complex and a large number of cofactors. It forms dimeric complexes. Heme b serves as cofactor.

The protein resides in the plastid. The protein localises to the chloroplast thylakoid membrane. This b-type cytochrome is tightly associated with the reaction center of photosystem II (PSII). PSII is a light-driven water:plastoquinone oxidoreductase that uses light energy to abstract electrons from H(2)O, generating O(2) and a proton gradient subsequently used for ATP formation. It consists of a core antenna complex that captures photons, and an electron transfer chain that converts photonic excitation into a charge separation. The sequence is that of Cytochrome b559 subunit beta from Cedrus deodara (Deodar cedar).